The following is a 372-amino-acid chain: Protein phosphatase 1 regulatory subunit 42 (372 aa).

LRR repeat units follow at residues 30 to 51, 52 to 71, 72 to 93, 94 to 115, 116 to 137, 146 to 167, and 168 to 189; these read RITH…TMCR, NLTV…NLGS, NLTH…SGLK, RLEK…EGLR, ELRE…LFDP, SLSV…AVLE, and NLTQ…EFVL. The region spanning 203–241 is the LRRCT domain; sequence NPVCLKPKYREKVTIISKTLEILDGKEIKEMARQFLLNW.

It localises to the cytoplasm. The protein resides in the cytoskeleton. The protein localises to the microtubule organizing center. It is found in the centrosome. Its function is as follows. May regulate phosphatase activity of protein phosphatase 1 (PP1) complexes. This is Protein phosphatase 1 regulatory subunit 42 (ppp1r42) from Xenopus laevis (African clawed frog).